The primary structure comprises 256 residues: tRNA pseudouridine synthase A (256 aa).

The active-site Nucleophile is the D55. Residue Y113 coordinates substrate.

This sequence belongs to the tRNA pseudouridine synthase TruA family. In terms of assembly, homodimer.

The enzyme catalyses uridine(38/39/40) in tRNA = pseudouridine(38/39/40) in tRNA. Formation of pseudouridine at positions 38, 39 and 40 in the anticodon stem and loop of transfer RNAs. The protein is tRNA pseudouridine synthase A of Ligilactobacillus salivarius (strain UCC118) (Lactobacillus salivarius).